The chain runs to 328 residues: Malate dehydrogenase 1 (328 aa).

Position 12 to 18 (12 to 18 (GAAGQIG)) interacts with NAD(+). 2 residues coordinate substrate: R95 and R101. Residues N108, Q115, and 132–134 (VGN) contribute to the NAD(+) site. N134 and R165 together coordinate substrate. H190 (proton acceptor) is an active-site residue.

Belongs to the LDH/MDH superfamily. MDH type 2 family.

It carries out the reaction (S)-malate + NAD(+) = oxaloacetate + NADH + H(+). In terms of biological role, catalyzes the reversible oxidation of malate to oxaloacetate. The polypeptide is Malate dehydrogenase 1 (Albidiferax ferrireducens (strain ATCC BAA-621 / DSM 15236 / T118) (Rhodoferax ferrireducens)).